A 56-amino-acid chain; its full sequence is Mitoregulin (56 aa).

Topologically, residues 2 to 9 are mitochondrial matrix; the sequence is ADVSERTL. A helical transmembrane segment spans residues 10 to 27; it reads QVSVLVAFASGVVLGWQA. At 28–56 the chain is on the mitochondrial intermembrane side; sequence NRLRRRYLDWRKRRLQDKLATTQKKLDLA.

It belongs to the mitoregulin family. Interacts with mitochondrial trifunctional enzyme, a heterotetrameric complex composed of 2 HADHA subunits and 2 HADHB subunits. Interacts with cytochrome b5 reductase CYB5R3; the interaction is required to maintain cellular lipid composition and leads to stimulation of mitochondrial respiratory complex I activity. Interacts with ATP synthase subunit ATP5F1B/ATP5B. Enriched in heart and skeletal muscle (at protein level). Also enriched in adipose tissue with lower levels detected in liver, pancreas and brain (at protein level). Higher levels in differentiated myotubes than in satellite cells.

It localises to the mitochondrion inner membrane. In terms of biological role, positively regulates mitochondrial complex assembly and/or stability. Increases mitochondrial membrane potential while decreasing mitochondrial reactive oxygen species. Increases mitochondrial respiration rate. Increased mitochondrial respiratory activity promotes myogenic differentiation which facilitates muscle growth and regeneration. Increases mitochondrial calcium retention capacity. Plays a role in maintenance of cellular lipid composition through its interaction with cytochrome b5 reductase CYB5R3 which is required for mitochondrial respiratory complex I activity. Interacts with the mitochondrial trifunctional enzyme complex (MTE) and enhances fatty acid beta-oxidation. Not required for MTE formation or stability. Modulates triglyceride clearance in adipocytes through its role in regulating fatty acid beta-oxidation and lipolysis. This chain is Mitoregulin, found in Mus musculus (Mouse).